We begin with the raw amino-acid sequence, 389 residues long: MPAAFPVTAATPAGAEALDRLRHWPGEHRVAVGLSGGVDSSLTAALLVEAGWEVEGLTLWLMSGKGACCAEGLVDAAGICEQLEIPHHVVDSRDTFQREIVNGLIEGYQAGITPLPCSRCNRAVKFSPMLQWAQEKRGLARIATGHYARLRFDETTGRWRLLRGLDARKDQSYFLYDLTQEVLARVVFPLGELTKPDTRLEAARHGLRTAAKPESQDLCLADHHGSMRAFLDAYLPPRQGEIVLQDGTVVGEHDGIEHFTIGQRKGLGVAWSEPLHVVRLDAAMNRVVVATRDQAGRSHCVVGAINWVSMAPPAPEHSQMVQVQVRYRSAPVPARLTTMTAEASDAAAERPHRCRLDFDEPQFSITPGQAAVFYDGDAVLGGGLIQTSA.

Residues 33-40 and leucine 59 contribute to the ATP site; that span reads GLSGGVDS. Cysteine 120 serves as the catalytic Nucleophile. Cysteine 120 and cysteine 219 are joined by a disulfide. Glycine 145 contributes to the ATP binding site. The tract at residues 169-171 is interaction with tRNA; that stretch reads KDQ. Cysteine 219 serves as the catalytic Cysteine persulfide intermediate. The interaction with tRNA stretch occupies residues 326 to 327; the sequence is RY.

Belongs to the MnmA/TRMU family.

The protein localises to the cytoplasm. It catalyses the reaction S-sulfanyl-L-cysteinyl-[protein] + uridine(34) in tRNA + AH2 + ATP = 2-thiouridine(34) in tRNA + L-cysteinyl-[protein] + A + AMP + diphosphate + H(+). Functionally, catalyzes the 2-thiolation of uridine at the wobble position (U34) of tRNA, leading to the formation of s(2)U34. The chain is tRNA-specific 2-thiouridylase MnmA from Synechococcus sp. (strain WH7803).